Consider the following 211-residue polypeptide: High frequency lysogenization protein HflD homolog (211 aa).

The protein belongs to the HflD family.

It is found in the cytoplasm. It localises to the cell membrane. This chain is High frequency lysogenization protein HflD homolog, found in Buchnera aphidicola subsp. Acyrthosiphon pisum (strain 5A).